Here is a 382-residue protein sequence, read N- to C-terminus: L-lysine 4-hydroxylase (382 aa).

Residues His182, Glu184, and His318 each contribute to the Fe cation site.

The protein belongs to the clavaminate synthase family. Requires Fe(2+) as cofactor.

The catalysed reaction is L-lysine + 2-oxoglutarate + O2 = (4R)-4-hydroxy-L-lysine + succinate + CO2. Functionally, alpha-ketoglutarate-dependent dioxygenase that in vitro catalyzes the regio- and stereoselective hydroxylation of L-lysine, leading to (4R)-4-hydroxy-L-lysine. Cannot use D-lysine or L-ornithine as substrate. In Chitinophaga pinensis (strain ATCC 43595 / DSM 2588 / LMG 13176 / NBRC 15968 / NCIMB 11800 / UQM 2034), this protein is L-lysine 4-hydroxylase.